Here is a 365-residue protein sequence, read N- to C-terminus: NAC domain-containing protein 37 (365 aa).

An NAC domain is found at 9 to 158 (VPPGFRFHPT…GWVVCRAFKK (150 aa)). Residues 109-164 (IGMRKTLVFYKGRAPNGKKSDWIMHEYRLESDENAPPQEEGWVVCRAFKKRATGQA) mediate DNA binding.

Belongs to the plant vascular related NAC-domain protein family. In terms of assembly, interacts with NAC030/VND7. As to expression, expressed in root metaxylem pole and in shoot pre-procambium and procambium. Present in root developing xylems. Specifically expressed in vessels but not in interfascicular fibers in stems.

It localises to the nucleus. Functionally, transcription activator that binds to the secondary wall NAC binding element (SNBE), 5'-(T/A)NN(C/T)(T/C/G)TNNNNNNNA(A/C)GN(A/C/T)(A/T)-3', in the promoter of target genes. Involved in xylem formation by promoting the expression of secondary wall-associated transcription factors and of genes involved in secondary wall biosynthesis and programmed cell death, genes driven by the secondary wall NAC binding element (SNBE). Triggers thickening of secondary walls. This is NAC domain-containing protein 37 from Arabidopsis thaliana (Mouse-ear cress).